A 91-amino-acid polypeptide reads, in one-letter code: Cell division protein ZapA (91 aa).

Positions 58 to 91 (LTAVNIASEYLKLKEEYNRLREQLKKEKDGERDD) form a coiled coil.

Belongs to the ZapA family. Type 2 subfamily. Homodimer. Interacts with FtsZ.

Its subcellular location is the cytoplasm. In terms of biological role, activator of cell division through the inhibition of FtsZ GTPase activity, therefore promoting FtsZ assembly into bundles of protofilaments necessary for the formation of the division Z ring. It is recruited early at mid-cell but it is not essential for cell division. In Geobacillus kaustophilus (strain HTA426), this protein is Cell division protein ZapA.